Here is a 367-residue protein sequence, read N- to C-terminus: Probable dual-specificity RNA methyltransferase RlmN (367 aa).

The active-site Proton acceptor is Glu92. Positions 98–326 constitute a Radical SAM core domain; the sequence is QEYGLSVCVT…YDTLKKNGIN (229 aa). An intrachain disulfide couples Cys105 to Cys341. Residues Cys112, Cys116, and Cys119 each coordinate [4Fe-4S] cluster. S-adenosyl-L-methionine contacts are provided by residues 164–165, Ser196, 219–221, and Asn297; these read GE and SLH. Cys341 acts as the S-methylcysteine intermediate in catalysis.

This sequence belongs to the radical SAM superfamily. RlmN family. It depends on [4Fe-4S] cluster as a cofactor.

The protein localises to the cytoplasm. The enzyme catalyses adenosine(2503) in 23S rRNA + 2 reduced [2Fe-2S]-[ferredoxin] + 2 S-adenosyl-L-methionine = 2-methyladenosine(2503) in 23S rRNA + 5'-deoxyadenosine + L-methionine + 2 oxidized [2Fe-2S]-[ferredoxin] + S-adenosyl-L-homocysteine. The catalysed reaction is adenosine(37) in tRNA + 2 reduced [2Fe-2S]-[ferredoxin] + 2 S-adenosyl-L-methionine = 2-methyladenosine(37) in tRNA + 5'-deoxyadenosine + L-methionine + 2 oxidized [2Fe-2S]-[ferredoxin] + S-adenosyl-L-homocysteine. Its function is as follows. Specifically methylates position 2 of adenine 2503 in 23S rRNA and position 2 of adenine 37 in tRNAs. The polypeptide is Probable dual-specificity RNA methyltransferase RlmN (Listeria monocytogenes serovar 1/2a (strain ATCC BAA-679 / EGD-e)).